Consider the following 538-residue polypeptide: Chaperonin GroEL (538 aa).

Residues 29–32 (TIGP), 86–90 (DGTTT), glycine 413, 476–478 (NAA), and aspartate 492 contribute to the ATP site.

Belongs to the chaperonin (HSP60) family. In terms of assembly, forms a cylinder of 14 subunits composed of two heptameric rings stacked back-to-back. Interacts with the co-chaperonin GroES.

The protein localises to the cytoplasm. The catalysed reaction is ATP + H2O + a folded polypeptide = ADP + phosphate + an unfolded polypeptide.. Functionally, together with its co-chaperonin GroES, plays an essential role in assisting protein folding. The GroEL-GroES system forms a nano-cage that allows encapsulation of the non-native substrate proteins and provides a physical environment optimized to promote and accelerate protein folding. The chain is Chaperonin GroEL from Staphylococcus aureus (strain USA300).